A 447-amino-acid chain; its full sequence is Na(+)-translocating NADH-quinone reductase subunit A (447 aa).

It belongs to the NqrA family. Composed of six subunits; NqrA, NqrB, NqrC, NqrD, NqrE and NqrF.

It catalyses the reaction a ubiquinone + n Na(+)(in) + NADH + H(+) = a ubiquinol + n Na(+)(out) + NAD(+). Functionally, NQR complex catalyzes the reduction of ubiquinone-1 to ubiquinol by two successive reactions, coupled with the transport of Na(+) ions from the cytoplasm to the periplasm. NqrA to NqrE are probably involved in the second step, the conversion of ubisemiquinone to ubiquinol. This Haemophilus influenzae (strain ATCC 51907 / DSM 11121 / KW20 / Rd) protein is Na(+)-translocating NADH-quinone reductase subunit A.